A 765-amino-acid polypeptide reads, in one-letter code: MTNRISRLKTALFANTREISLERALLYTASHRQTEGEPVILRRAKATAYILEHVEISIRDEELIAGNRTVKPRAGIMSPEMDPYWLLKELDQFPTRPQDRFAISEEDKRIYREELFPYWEKRSMKDFINGQMTDEVKAATNTQIFSINQTDKGQGHIIIDYPRLLNHGLGELVAQMQQHCQQQPENHFYQAALLLLEASQKHILRYAELAETMAANCTDAQRREELLTIAEISRHNAQHKPQTFWQACQLFWYMNIILQYESNASSLSLGRFDQYMLPFYQTSLTQGEDAAFLKELLESLWVKCNDIVLLRSTSSARYFAGFPTGYTALLGGLTENGRSAVNVLSFLCLDAYQSVQLPQPNLGVRTNALIDTPFLMKTAETIRFGTGIPQIFNDEVVVPAFLNRGVSLEDARDYSVVGCVELSIPGRTYGLHDIAMFNLLKVMEICLHENEGNAALTYEGLLEQIRAKISHYITLMVEGSNICDIGHRDWAPVPLLSSFISDCLEKGRDITDGGARYNFSGVQGIGIANLSDSLHALKGMVFEQQRLSFDELLSVLKANFATPEGEKVRARLINRFEKYGNDIDEVDNISAELLRHYCKEVEKYQNPRGGYFTPGSYTVSAHVPLGSVVGATPDGRFAGEQLADGGLSPMLGQDAQGPTAVLKSVSKLDNTLLSNGTLLNVKFTPATLEGEAGLRKLADFLRAFTQLKLQHIQFNVVNADTLREAQQRPQDYAGLVVRVAGYSAFFVELSKEIQDDIIRRTAHQL.

A PFL domain is found at 3–637 (NRISRLKTAL…VVGATPDGRF (635 aa)). Residues 645–765 (GGLSPMLGQD…DIIRRTAHQL (121 aa)) enclose the Glycine radical domain. Glycine 741 is modified (glycine radical).

It belongs to the glycyl radical enzyme (GRE) family.

Its function is as follows. Probably shows dehydratase activity. The polypeptide is Probable dehydratase PflD (pflD) (Escherichia coli (strain K12)).